The following is a 314-amino-acid chain: Methionyl-tRNA formyltransferase (314 aa).

111-114 (SLLP) is a (6S)-5,6,7,8-tetrahydrofolate binding site.

This sequence belongs to the Fmt family.

It catalyses the reaction L-methionyl-tRNA(fMet) + (6R)-10-formyltetrahydrofolate = N-formyl-L-methionyl-tRNA(fMet) + (6S)-5,6,7,8-tetrahydrofolate + H(+). In terms of biological role, attaches a formyl group to the free amino group of methionyl-tRNA(fMet). The formyl group appears to play a dual role in the initiator identity of N-formylmethionyl-tRNA by promoting its recognition by IF2 and preventing the misappropriation of this tRNA by the elongation apparatus. The protein is Methionyl-tRNA formyltransferase of Chlorobium luteolum (strain DSM 273 / BCRC 81028 / 2530) (Pelodictyon luteolum).